We begin with the raw amino-acid sequence, 284 residues long: Ermin (284 aa).

The tract at residues 1-23 is disordered; that stretch reads MTDVPATFTQAECNGDKPPENGQ. A Phosphoserine modification is found at serine 73. Positions 110–251 are disordered; the sequence is REGHQWEKIP…PTLGKKSDIS (142 aa). Basic and acidic residues-rich tracts occupy residues 126-140 and 171-183; these read EIRR…QPLK and LHSK…KVWD. Positions 184 to 200 are enriched in acidic residues; the sequence is EEIDDDDDDNCNNDEDE. Over residues 201–220 the composition is skewed to basic and acidic residues; that stretch reads VRVIEFKKKHEEVSQFKEEG. Phosphoserine occurs at positions 214, 226, 230, and 233. Residues 225–235 are compositionally biased toward low complexity; that stretch reads DSPLSSASSQA. Threonine 237 carries the phosphothreonine modification. A binds actin region spans residues 265–284; it reads KIRKGNTKQRIDEFESMMHL.

Binds actin. As to expression, highly expressed in adult and fetal brain. Expressed at intermediate levels in the lung and liver.

Its subcellular location is the cytoplasm. It is found in the cytoskeleton. Functionally, plays a role in cytoskeletal rearrangements during the late wrapping and/or compaction phases of myelinogenesis as well as in maintenance and stability of myelin sheath in the adult. May play an important role in late-stage oligodendroglia maturation, myelin/Ranvier node formation during CNS development, and in the maintenance and plasticity of related structures in the mature CNS. The polypeptide is Ermin (ERMN) (Homo sapiens (Human)).